A 386-amino-acid chain; its full sequence is Succinate--CoA ligase [ADP-forming] subunit beta (386 aa).

The region spanning 9 to 244 is the ATP-grasp domain; sequence KAVLRSYGVS…LEEEDSKEIE (236 aa). ATP is bound by residues K46, 53–55, E99, C102, and E107; that span reads GRG. Mg(2+)-binding residues include N199 and D213. Substrate-binding positions include N264 and 321–323; that span reads GIM.

This sequence belongs to the succinate/malate CoA ligase beta subunit family. In terms of assembly, heterotetramer of two alpha and two beta subunits. Mg(2+) serves as cofactor.

The enzyme catalyses succinate + ATP + CoA = succinyl-CoA + ADP + phosphate. It catalyses the reaction GTP + succinate + CoA = succinyl-CoA + GDP + phosphate. Its pathway is carbohydrate metabolism; tricarboxylic acid cycle; succinate from succinyl-CoA (ligase route): step 1/1. Functionally, succinyl-CoA synthetase functions in the citric acid cycle (TCA), coupling the hydrolysis of succinyl-CoA to the synthesis of either ATP or GTP and thus represents the only step of substrate-level phosphorylation in the TCA. The beta subunit provides nucleotide specificity of the enzyme and binds the substrate succinate, while the binding sites for coenzyme A and phosphate are found in the alpha subunit. This chain is Succinate--CoA ligase [ADP-forming] subunit beta, found in Bacillus mycoides (strain KBAB4) (Bacillus weihenstephanensis).